The sequence spans 159 residues: RNA pyrophosphohydrolase (159 aa).

One can recognise a Nudix hydrolase domain in the interval 6–149; the sequence is GFRPNVGIIL…KREVYRRALK (144 aa). The Nudix box motif lies at 38 to 59; the sequence is GGINARETPEEALFRELNEEVG.

The protein belongs to the Nudix hydrolase family. RppH subfamily. Requires a divalent metal cation as cofactor.

In terms of biological role, accelerates the degradation of transcripts by removing pyrophosphate from the 5'-end of triphosphorylated RNA, leading to a more labile monophosphorylated state that can stimulate subsequent ribonuclease cleavage. The polypeptide is RNA pyrophosphohydrolase (Stutzerimonas stutzeri (strain A1501) (Pseudomonas stutzeri)).